The chain runs to 1762 residues: Kinase D-interacting substrate of 220 kDa (1762 aa).

The Cytoplasmic segment spans residues 1–508 (MSVLISQSVI…WLIVFLTLLL (508 aa)). 11 ANK repeats span residues 45-74 (AAEQ…NWTA), 78-107 (ASKE…GWTA), 111-140 (ACYK…SVYP), 145-174 (AGRG…TTPL), 178-207 (ARKG…MTAL), 211-240 (VKGG…NTAL), 244-273 (SKEG…DTVL), 277-306 (VRGG…KTAL), 310-339 (VEKG…ETPL), 343-372 (TKMR…DTPL), and 376-405 (IRGR…KAGE). The region spanning 440–953 (YDLYSSALAD…NIVSVTGRLL (514 aa)) is the KAP NTPase domain. A helical transmembrane segment spans residues 509–529 (CGGLGLVFAFTVDTNLAIAIS). At 530–533 (LSFL) the chain is on the extracellular side. The chain crosses the membrane as a helical span at residues 534–554 (ALIYIFFIVIYFGGRREGESW). The Cytoplasmic portion of the chain corresponds to 555–668 (NWAWALSTRL…SFVIFLFIVG (114 aa)). The chain crosses the membrane as a helical span at residues 669–689 (CIIAGITLLAIFRVDPKHLTV). The Extracellular segment spans residues 690-696 (NAILISI). A helical transmembrane segment spans residues 697–717 (ASVVGLAFVLNCRTWWQVLDS). The Cytoplasmic segment spans residues 718 to 1680 (LLNSQRKRLH…TPSTVTLNNN (963 aa)). Ser-882 and Ser-885 each carry phosphoserine. Thr-914 is subject to Phosphothreonine. A Phosphoserine; by PKD modification is found at Ser-918. Residues 1089-1092 (PRPP) form a mediates interaction with CRKL region. Residues Ser-1163, Ser-1288, Ser-1344, Ser-1351, Ser-1353, Ser-1354, and Ser-1357 each carry the phosphoserine modification. 4 disordered regions span residues 1279-1305 (DPRF…HTEL), 1336-1358 (RHSN…LNSQ), 1390-1440 (EGGT…DGRK), and 1452-1556 (YSSS…EPIR). The segment covering 1338–1350 (SNLSWQSQTRRTP) has biased composition (polar residues). Positions 1395 to 1422 (SSTISGRSSPHSTYYIGQSSSGGSIHST) are enriched in low complexity. Residues 1423–1440 (LEQERGKEGELKQEDGRK) show a composition bias toward basic and acidic residues. Residues 1452–1462 (YSSSGVSTNEA) are compositionally biased toward polar residues. Residues Ser-1513, Ser-1518, Ser-1547, and Ser-1566 each carry the phosphoserine modification. Positions 1514-1524 (DEDESGTEESD) are enriched in acidic residues. Residues 1529–1553 (LKDDKDKKAEGKAERVCKSPEHSAE) are compositionally biased toward basic and acidic residues. Positions 1571 to 1628 (DKKDSSDSGVRSNESSPNHSLHNEAADDSQLEKANLIELEDEGHSGKRGMPHSLSGLQ) are disordered. Over residues 1579–1590 (GVRSNESSPNHS) the composition is skewed to polar residues. Ser-1615 and Ser-1625 each carry phosphoserine. Thr-1671 is subject to Phosphothreonine. Ser-1673 carries the phosphoserine modification. The residue at position 1676 (Thr-1676) is a Phosphothreonine. A disordered region spans residues 1704-1762 (ILRPGPSPNPTAVQNENLKSMAHKRSQRSSYTRLSKDASELHAASSESTGFGEERESIL). The PDZ-binding signature appears at 1757-1762 (ERESIL).

Found in a complex, at least composed of KIDINS220, MAGI2, NTRK1 and RAPGEF2; the complex is mainly formed at late endosomes in a nerve growth factor (NGF)-dependent manner. Interacts with RAPGEF2; the interaction is strengthened after NGF stimulation. Isoform 2 interacts (via C-terminal domain) with MAGI2 isoform 1 (via PDZ domain). Interacts with NTRK1, NTRK2, NTRK3, ERKL and NGFR. Can form a ternary complex with NGFR and NTRK1 and this complex is affected by the expression levels of KIDINS220/ARMS. An increase in KIDINS220/ARMS expression leads to a decreased association of NGFR and NTRK1. Interacts (via PDZ-binding motif) with SNTA1 and SNTB2 (via PDZ domains). Interacts with EPHA4 and PRKD1. Post-translationally, tyrosine phosphorylated by NTRK1, NTRK2, EPHB2 and EPHA4. Phosphorylation at Ser-918 is induced by phorbol ester treatment. Phosphorylation by NTRK2 is induced by brain-derived neurotrophic factor (BDNF) and neurotrophin-4/5. Phosphorylation by NTRK1 is induced by nerve growth factor (NGF). As to expression, expressed in developing nervous system and in highly plastic areas of the adult brain. Also expressed in neuroendocrine cells, where it concentrates at the tip of neurites. Expressed in developing muscle and is concentrated at the neuromuscular junction (NMS). SNTA1 can regulate its localization in the NMS.

The protein resides in the membrane. The protein localises to the late endosome. Functionally, promotes a prolonged MAP-kinase signaling by neurotrophins through activation of a Rap1-dependent mechanism. Provides a docking site for the CRKL-C3G complex, resulting in Rap1-dependent sustained ERK activation. May play an important role in regulating postsynaptic signal transduction through the syntrophin-mediated localization of receptor tyrosine kinases such as EPHA4. In cooperation with SNTA1 can enhance EPHA4-induced JAK/STAT activation. Plays a role in nerve growth factor (NGF)-induced recruitment of RAPGEF2 to late endosomes and neurite outgrowth. May play a role in neurotrophin- and ephrin-mediated neuronal outgrowth and in axon guidance during neural development and in neuronal regeneration. The chain is Kinase D-interacting substrate of 220 kDa (Kidins220) from Rattus norvegicus (Rat).